The primary structure comprises 120 residues: Ribonuclease P protein component 4 (120 aa).

The Zn(2+) site is built by Cys67, Cys70, Cys96, and Cys99.

It belongs to the eukaryotic/archaeal RNase P protein component 4 family. Consists of a catalytic RNA component and at least 4-5 protein subunits. The cofactor is Zn(2+).

It localises to the cytoplasm. The catalysed reaction is Endonucleolytic cleavage of RNA, removing 5'-extranucleotides from tRNA precursor.. Its function is as follows. Part of ribonuclease P, a protein complex that generates mature tRNA molecules by cleaving their 5'-ends. This Thermococcus sibiricus (strain DSM 12597 / MM 739) protein is Ribonuclease P protein component 4.